The following is a 253-amino-acid chain: 5'-nucleotidase SurE (253 aa).

Residues D8, D9, S40, and N97 each contribute to the a divalent metal cation site.

The protein belongs to the SurE nucleotidase family. A divalent metal cation is required as a cofactor.

It is found in the cytoplasm. It carries out the reaction a ribonucleoside 5'-phosphate + H2O = a ribonucleoside + phosphate. Nucleotidase that shows phosphatase activity on nucleoside 5'-monophosphates. The sequence is that of 5'-nucleotidase SurE from Desulforamulus reducens (strain ATCC BAA-1160 / DSM 100696 / MI-1) (Desulfotomaculum reducens).